Consider the following 353-residue polypeptide: UDP-N-acetylglucosamine--N-acetylmuramyl-(pentapeptide) pyrophosphoryl-undecaprenol N-acetylglucosamine transferase (353 aa).

UDP-N-acetyl-alpha-D-glucosamine is bound by residues Asn-123, Arg-161, Ser-189, Ile-243, 262-267 (ALTVSE), and Gln-287.

Belongs to the glycosyltransferase 28 family. MurG subfamily.

The protein localises to the cell membrane. It catalyses the reaction di-trans,octa-cis-undecaprenyl diphospho-N-acetyl-alpha-D-muramoyl-L-alanyl-D-glutamyl-meso-2,6-diaminopimeloyl-D-alanyl-D-alanine + UDP-N-acetyl-alpha-D-glucosamine = di-trans,octa-cis-undecaprenyl diphospho-[N-acetyl-alpha-D-glucosaminyl-(1-&gt;4)]-N-acetyl-alpha-D-muramoyl-L-alanyl-D-glutamyl-meso-2,6-diaminopimeloyl-D-alanyl-D-alanine + UDP + H(+). The protein operates within cell wall biogenesis; peptidoglycan biosynthesis. Its function is as follows. Cell wall formation. Catalyzes the transfer of a GlcNAc subunit on undecaprenyl-pyrophosphoryl-MurNAc-pentapeptide (lipid intermediate I) to form undecaprenyl-pyrophosphoryl-MurNAc-(pentapeptide)GlcNAc (lipid intermediate II). The protein is UDP-N-acetylglucosamine--N-acetylmuramyl-(pentapeptide) pyrophosphoryl-undecaprenol N-acetylglucosamine transferase of Buchnera aphidicola subsp. Baizongia pistaciae (strain Bp).